The primary structure comprises 824 residues: MTMTGGHHHDAHHEDFQLKDTNPLLGEQWPKGAAGPARPAVGGGIAGWLGLEKPSSTYDLVEQMFFLYVRVVKAKDLPPNPITGSPMDPYVEVKLGNYKGTTKHYDRRANPEWDQVFAFSKSRVQSNVLEVYLKDKEMLGRDDYVGRVVFDLAEVPTRVPPDSPLAPQWYRLEERRVGGGGDGGGLKVRGELMLAVWIGTQADEAFPEAWHSDAATVRGEGVASVRSKAYVSPKLWYLRVNVIEAQDVQPQARGRAPEVFVKAQVGNQILKTSVVAAPTLNPRWNEDLVFVVAEPFEEQLLLTVEDRVTPRKDDLLGRAALPLALFEKRLDHRPFVQSRWFDLEKFGIGGAIEGETRRELRFASRVHVRACLEGAYHVMDESTMYISDTRPTARQLWKPPVGVLEVGILGAAGLQPMKNRDGRGTTDAYCVAKYGQKWVRTRTMLGTFSPTWNEQYTWEVFDPCTVITIGVFDNNHLGNGNGNGNNAGGGGGGSPPARDARVGKIRIRLSTLETDRVYTHAYPLIVLQPSGVKKMGELRLAVRFTCLSLMNMVHLYTQPLLPRMHYLHPFTVTQLDALRYQAMGIVAARLGRAEPPLRREVVEYMLDVESHMWSMRRSKANFFRAVSLFSGAAAAARWFADVCHWKNVATTALVHVLLLILVWYPELILPTVFLYMFMIGLWNYRRRPRHPPHMDTKMSWAEAVHPDELDEEFDTFPTSRQQDVVYMRYDRLRSVAGRIQTVVGDMATQGERLQSLLGWRDPRATCLFVVFCLVAAVVLYVTPFRVVALVAGLYLLRHPRFRSRLPAVPSNFFRRLPSRADSML.

C2 domains follow at residues 48-170 (WLGL…PQWY), 217-341 (VRGE…SRWF), and 385-522 (YISD…THAY). Helical transmembrane passes span 625-645 (AVSL…VCHW), 657-677 (LLLI…LYMF), and 764-784 (ATCL…VTPF).

It belongs to the MCTP family. In terms of assembly, interacts with RFT1 and PI4KG4. As to expression, specifically expressed in the phloem including companion cells.

It localises to the endoplasmic reticulum membrane. In terms of biological role, involved in the export of the long day-specific flower-promoting signal (florigen) RFT1 from the phloem companion cells to sieve elements. Promotes flowering under long days through the transport of RFT1 from the leaves to the shoot apical meristem (SAM). The polypeptide is FT-interacting protein 1 (Oryza sativa subsp. japonica (Rice)).